Consider the following 333-residue polypeptide: Electron transfer flavoprotein subunit alpha, mitochondrial (333 aa).

A mitochondrion-targeting transit peptide spans 1–19 (MFRAAAPGQLRRATSLLRF). Positions 20–204 (QSTLVIAEHA…GISEWLDQKL (185 aa)) are domain I. Lys59 bears the N6-acetyllysine; alternate mark. At Lys59 the chain carries N6-succinyllysine; alternate. N6-acetyllysine is present on Lys62. Lys69 is modified (N6-acetyllysine; alternate). Lys69 carries the post-translational modification N6-succinyllysine; alternate. An N6-acetyllysine modification is found at Lys75. Residue Lys85 is modified to N6-acetyllysine; alternate. Lys85 is modified (N6-succinyllysine; alternate). Residue Thr93 is modified to Phosphothreonine. N6-acetyllysine occurs at positions 101 and 139. Phosphoserine is present on Ser140. The residue at position 158 (Lys158) is an N6-acetyllysine; alternate. An N6-succinyllysine; alternate modification is found at Lys158. Lys164 bears the N6-acetyllysine mark. At Lys187 the chain carries N6-succinyllysine. Lys203 is modified (N6-acetyllysine; alternate). N6-succinyllysine; alternate is present on Lys203. Residues 205–333 (TKSDRPELTG…PEMTELLKKK (129 aa)) are domain II. An N6-succinyllysine modification is found at Lys216. Arg223 contributes to the FAD binding site. N6-acetyllysine; alternate is present on residues Lys226 and Lys232. 2 positions are modified to N6-succinyllysine; alternate: Lys226 and Lys232. FAD contacts are provided by residues Ser248, 263 to 266 (VGQT), 281 to 286 (SGAIQH), and Asn300. N6-succinyllysine is present on Lys301. Residue 318–319 (DL) coordinates FAD.

The protein belongs to the ETF alpha-subunit/FixB family. As to quaternary structure, heterodimer composed of ETFA and ETFB. Identified in a complex that contains ETFA, ETFB and ETFRF1. Interaction with ETFRF1 promotes dissociation of the bound FAD and loss of electron transfer activity. Interacts with TASOR. The cofactor is FAD.

It localises to the mitochondrion matrix. Functionally, heterodimeric electron transfer flavoprotein that accepts electrons from several mitochondrial dehydrogenases, including acyl-CoA dehydrogenases, glutaryl-CoA and sarcosine dehydrogenase. It transfers the electrons to the main mitochondrial respiratory chain via ETF-ubiquinone oxidoreductase (ETF dehydrogenase). Required for normal mitochondrial fatty acid oxidation and normal amino acid metabolism. This chain is Electron transfer flavoprotein subunit alpha, mitochondrial (ETFA), found in Bos taurus (Bovine).